The primary structure comprises 342 residues: Putative TPR repeat-containing protein R856 (342 aa).

TPR repeat units lie at residues 36–69 (VHIF…IFNG), 77–110 (FYSV…IKDM), 119–152 (VYAL…NEKL), 161–194 (AFVL…YREK), 203–236 (AFTI…FNKI), 245–278 (AFSL…YKNV), and 291–324 (ASCL…FEST).

The protein is Putative TPR repeat-containing protein R856 of Acanthamoeba polyphaga mimivirus (APMV).